Reading from the N-terminus, the 469-residue chain is Adenosylhomocysteinase (469 aa).

Residues T58, D133, and E195 each coordinate substrate. Position 196–198 (196–198 (TTT)) interacts with NAD(+). Residues K225 and D229 each contribute to the substrate site. NAD(+)-binding positions include N230, 259 to 264 (GFGDVG), E282, N317, 338 to 340 (IGH), and N383.

The protein belongs to the adenosylhomocysteinase family. NAD(+) serves as cofactor.

It localises to the cytoplasm. It catalyses the reaction S-adenosyl-L-homocysteine + H2O = L-homocysteine + adenosine. It participates in amino-acid biosynthesis; L-homocysteine biosynthesis; L-homocysteine from S-adenosyl-L-homocysteine: step 1/1. Its function is as follows. May play a key role in the regulation of the intracellular concentration of adenosylhomocysteine. This chain is Adenosylhomocysteinase, found in Rhodopseudomonas palustris (strain ATCC BAA-98 / CGA009).